We begin with the raw amino-acid sequence, 100 residues long: Urease subunit gamma (100 aa).

It belongs to the urease gamma subunit family. In terms of assembly, heterotrimer of UreA (gamma), UreB (beta) and UreC (alpha) subunits. Three heterotrimers associate to form the active enzyme.

It localises to the cytoplasm. It catalyses the reaction urea + 2 H2O + H(+) = hydrogencarbonate + 2 NH4(+). The protein operates within nitrogen metabolism; urea degradation; CO(2) and NH(3) from urea (urease route): step 1/1. The polypeptide is Urease subunit gamma (Pseudomonas aeruginosa (strain UCBPP-PA14)).